The sequence spans 612 residues: Chaperone protein DnaK (612 aa).

T174 is modified (phosphothreonine; by autocatalysis). A disordered region spans residues 578–612; the sequence is GGQTGGATNTDSAGQGTTQDNVYEANYKVEDDDNK. The segment covering 586–598 has biased composition (polar residues); that stretch reads NTDSAGQGTTQDN.

This sequence belongs to the heat shock protein 70 family.

Its function is as follows. Acts as a chaperone. The protein is Chaperone protein DnaK of Thermoanaerobacter sp. (strain X514).